The following is a 118-amino-acid chain: T cell receptor gamma variable 8 (118 aa).

The signal sequence occupies residues Met1 to Gln17. In terms of domain architecture, Ig-like spans Lys18–Arg118. Cys41 and Cys113 are oxidised to a cystine.

In terms of assembly, gamma-delta TR is a heterodimer composed of a gamma and delta chain; disulfide-linked. The gamma-delta TR is associated with the transmembrane signaling CD3 coreceptor proteins following the stoichiometry: a single gamma-delta TR heterodimer associates with one CD3D-CD3E heterodimer, one CD3G-CD3E heterodimer and one CD247 homodimer forming a stable octameric structure. Upon activation, gamma-delta TR complex associates with FCER1G to initiate intracellular signaling.

It localises to the cell membrane. Its function is as follows. V region of the variable domain of T cell receptor (TR) gamma chain that participates in the antigen recognition. Gamma-delta TRs recognize a variety of self and foreign non-peptide antigens frequently expressed at the epithelial boundaries between the host and external environment, including endogenous lipids presented by MH-like protein CD1D and phosphoantigens presented by butyrophilin-like molecule BTN3A1. Upon antigen recognition induces rapid, innate-like immune responses involved in pathogen clearance and tissue repair. Binding of gamma-delta TR complex to antigen triggers phosphorylation of immunoreceptor tyrosine-based activation motifs (ITAMs) in the CD3 chains by the LCK and FYN kinases, allowing the recruitment, phosphorylation, and activation of ZAP70 that facilitates phosphorylation of the scaffolding proteins LCP2 and LAT. This lead to the formation of a supramolecular signalosome that recruits the phospholipase PLCG1, resulting in calcium mobilization and ERK activation, ultimately leading to T cell expansion and differentiation into effector cells. Gamma-delta TRs are produced through somatic rearrangement of a limited repertoire of variable (V), diversity (D), and joining (J) genes. The potential diversity of gamma-delta TRs is conferred by the unique ability to rearrange (D) genes in tandem and to utilize all three reading frames. The combinatorial diversity is considerably increased by the sequence exonuclease trimming and random nucleotide (N) region additions which occur during the V-(D)-J rearrangements. The sequence is that of T cell receptor gamma variable 8 from Homo sapiens (Human).